Here is a 346-residue protein sequence, read N- to C-terminus: Probable RNA methyltransferase PSPA7_3453 (346 aa).

The active-site Proton acceptor is E91. One can recognise a Radical SAM core domain in the interval 94–320 (LLPRGGLCVS…TKVRNSAGQD (227 aa)). C101 and C325 form a disulfide bridge. C108, C112, and C115 together coordinate [4Fe-4S] cluster. Residues 153–154 (GE), S183, 206–208 (SLH), and N282 each bind S-adenosyl-L-methionine. The active-site S-methylcysteine intermediate is the C325.

This sequence belongs to the radical SAM superfamily. RlmN family. It depends on [4Fe-4S] cluster as a cofactor.

Its subcellular location is the cytoplasm. The polypeptide is Probable RNA methyltransferase PSPA7_3453 (Pseudomonas paraeruginosa (strain DSM 24068 / PA7) (Pseudomonas aeruginosa (strain PA7))).